Consider the following 294-residue polypeptide: Nucleotide-binding protein CLL_A3342 (294 aa).

Residue Gly8–Thr15 participates in ATP binding. Asp59 to Gly62 contributes to the GTP binding site.

The protein belongs to the RapZ-like family.

Functionally, displays ATPase and GTPase activities. This Clostridium botulinum (strain Eklund 17B / Type B) protein is Nucleotide-binding protein CLL_A3342.